The following is a 553-amino-acid chain: uncharacterized protein (553 aa).

The next 5 membrane-spanning stretches (helical) occupy residues 13-30, 37-59, 69-91, 98-120, and 157-179; these read ALQA…GLGL, GISL…GLSI, SFGL…FSSF, LNML…SYTT, and TPAL…AVLL. RCK C-terminal domains follow at residues 190–273 and 281–365; these read LEVQ…LFGE and KEDI…VLGN. The next 6 helical transmembrane spans lie at 375 to 397, 402 to 424, 436 to 458, 468 to 490, 497 to 514, and 529 to 551; these read LVAV…SIPG, VRLG…GPRL, LMLR…GAHF, LLWI…FFAF, FGSV…PMAL, and AYAT…LLMF.

It belongs to the AAE transporter (TC 2.A.81) family.

Its subcellular location is the cell membrane. This is an uncharacterized protein from Bacteroides fragilis (strain YCH46).